The chain runs to 620 residues: Preterminal protein (620 aa).

The Nuclear localization signal motif lies at 356–365 (RLPMRRRRRR). Position 545 is an O-(5'-phospho-DNA)-serine (S545).

It belongs to the adenoviridae terminal protein family. Heterodimer with the polymerase; this heterodimer binds to bp 9 to 18 of the genome. Interacts with host POU2F1; POU2F1 binds to the auxiliary sequences in the inverted terminal repeats and tethers the pTP-POL heterodimer to the origin DNA thereby participating in the assembly of the pre-initiation complex (POL-TP-DBP-NFIA-POU2F1). Preterminal protein is used to replicate viral genome, upon genomic encapsidation it is processed first into iTP and finally into TP by adenovirus protease.

It localises to the host nucleus matrix. Protein covalently bound to the viral DNA that acts as a primer for viral genomic replication by DNA strand displacement. Assembles on the viral origin of replication in an initiation complex with viral polymerase, DBP, host NFIA and host POU2F1/OCT1. During initiation, the polymerase covalently couples the first dCTP with Ser-580 of pTP. The terminal protein stimulates the template activity over 20 fold compared to protein-free templates. Neo-synthesized viral genomes are linked to two preterminal proteins, one for each 5' end. These new genomes are encapsidated in the nucleus, and during capsid maturation by viral protease, preterminal protein is first cleaved into intermediary (iTP), then into mature TP. May play a role in host nuclear matrix localization of genomic DNA. The polypeptide is Preterminal protein (Bovine adenovirus 2 (BAdV-2)).